The following is a 1770-amino-acid chain: Serine/threonine-protein kinase RIM15 (1770 aa).

A disordered region spans residues 334 to 358 (HSLSTFPQDNGNNNNNNNNNNNNNN). Residues 343–358 (NGNNNNNNNNNNNNNN) are compositionally biased toward low complexity. Phosphoserine is present on residues serine 380 and serine 476. Disordered stretches follow at residues 530-563 (TPTANDIRHPSPLPRSCSNTVMKLPTPRRKLDSN) and 583-694 (STIS…NSVL). Positions 583 to 601 (STISIDRDNNTNSRGSSMK) are enriched in polar residues. The segment covering 611–632 (SRTSNSERPSSSSSRLGIRSRS) has biased composition (low complexity). Positions 637–660 (QKIEYSHVDNDDRTNEMLSRDKDS) are enriched in basic and acidic residues. The segment covering 669–692 (TTITSSTQATTTGTKTNSNNSTNS) has biased composition (low complexity). The residue at position 704 (threonine 704) is a Phosphothreonine. Residues serine 709, serine 733, serine 736, and serine 737 each carry the phosphoserine modification. Threonine 747 is subject to Phosphothreonine. The 461-residue stretch at 794–1254 (YDILKPISKG…IQEIKDHPYF (461 aa)) folds into the Protein kinase domain. ATP is bound by residues 800-808 (ISKGAYGSV) and lysine 823. Aspartate 918 acts as the Proton acceptor in catalysis. Residues 970-980 (NNFTMNNNNSN) show a composition bias toward low complexity. A disordered region spans residues 970 to 1032 (NNFTMNNNNS…MTPTPSTNTV (63 aa)). Residues 981–990 (HSQLSTPDSF) are compositionally biased toward polar residues. Positions 1014–1031 (YSSTSNSHSMTPTPSTNT) are enriched in low complexity. A phosphoserine mark is found at serine 1044, serine 1048, and serine 1064. Threonine 1075 is subject to Phosphothreonine; by PHO85. The 66-residue stretch at 1255-1320 (KNVDWDHVYD…NTDVSELSAA (66 aa)) folds into the AGC-kinase C-terminal domain. Over residues 1378 to 1391 (TGYITPNGTGTTTT) the composition is skewed to low complexity. Residues 1378–1403 (TGYITPNGTGTTTTSAKNSPNLKNLS) are disordered. Positions 1392-1401 (SAKNSPNLKN) are enriched in polar residues. Serine 1421 is subject to Phosphoserine. Disordered stretches follow at residues 1448–1507 (KSEH…STFG) and 1519–1572 (FSTR…PANT). The segment covering 1463–1481 (SSASLMGSSSDGSVSTPGS) has biased composition (low complexity). Serine 1531, serine 1538, serine 1542, and serine 1565 each carry phosphoserine. Residues 1636–1750 (DVLVCEPIPI…ELKKLVAKYA (115 aa)) form the Response regulatory domain. Phosphoserine is present on serine 1764.

Belongs to the protein kinase superfamily. Ser/Thr protein kinase family. As to quaternary structure, interacts with the cyclin-dependent kinase (CDK) PHO85 and IGO1. Post-translationally, autophosphorylated. Phosphorylation by PKA strongly inhibits kinase activity. Phosphorylation by cyclin-CDK PHO80-PHO85 under favorable growth condition causes inactivation of RIM15 by promoting its export to the cytoplasm.

It is found in the cytoplasm. It localises to the nucleus. It carries out the reaction L-seryl-[protein] + ATP = O-phospho-L-seryl-[protein] + ADP + H(+). The catalysed reaction is L-threonyl-[protein] + ATP = O-phospho-L-threonyl-[protein] + ADP + H(+). With respect to regulation, kinase activity is inhibited by phosphorylation by cAMP-dependent protein kinase (PKA). In terms of biological role, protein kinase that positively regulates proper entry into stationary phase of cells under nutrient starvation conditions. Involved in glycogen and trehalose accumulation, derepression of stress-induced genes, induction of thermotolerance and starvation resistance, and proper G1 cell cycle arrest. Also involved in the activation of a meiotic genes activation pathway. Phosphorylates IGO1 and IGO2, both involved in the TORC1 control of gene expression and chronological life span. The chain is Serine/threonine-protein kinase RIM15 (RIM15) from Saccharomyces cerevisiae (strain ATCC 204508 / S288c) (Baker's yeast).